The following is an 800-amino-acid chain: Leukocyte receptor cluster member 8 homolog (800 aa).

5 disordered regions span residues 118 to 149 (NYQS…MSYS), 175 to 229 (PCIQ…GFKF), 245 to 273 (SSEH…PQQQ), 335 to 394 (TIDW…GRGS), and 407 to 519 (KESS…HGHG). 2 stretches are compositionally biased toward low complexity: residues 120-131 (QSMSSQSGQHQG) and 184-201 (NQSN…SQQS). Residues 252–261 (SAGQQQQQAT) are compositionally biased toward polar residues. Over residues 338-352 (WSREPLPGKDGGKES) the composition is skewed to basic and acidic residues. A compositionally biased stretch (polar residues) spans 360–387 (QTTLQTSHGSTITITQSPRGGGNSTNAA). Residues 409–418 (SSSSSSAGSR) are compositionally biased toward low complexity. Composition is skewed to basic residues over residues 419-433 (SRSR…RRYR) and 508-519 (EKRAARFQHGHG). A PCI domain is found at 636–800 (DHEEFNQCQA…KLSLAVLPNI (165 aa)).

The polypeptide is Leukocyte receptor cluster member 8 homolog (leng8) (Xenopus laevis (African clawed frog)).